The chain runs to 132 residues: Homeobox protein HD-4 (132 aa).

Residues 29–88 constitute a DNA-binding region (homeobox); that stretch reads GLSGYRYKTHIQVYVLTKIFEITQYPSHDTRQNLAILLNMSPRTIQIWFQNSRSVSRGAA. Positions 82–101 are disordered; the sequence is SVSRGAAKKKVSKDNGPQEA.

Its subcellular location is the nucleus. In Encephalitozoon cuniculi (strain GB-M1) (Microsporidian parasite), this protein is Homeobox protein HD-4 (HD-4).